The following is a 360-amino-acid chain: Photosystem II protein D1 (360 aa).

Transmembrane regions (helical) follow at residues Tyr29–Ser46, His118–Leu133, and Trp142–Ala156. Residue His118 participates in chlorophyll a binding. Residue Tyr126 coordinates pheophytin a. Residues Asp170 and Glu189 each contribute to the [CaMn4O5] cluster site. A helical transmembrane segment spans residues Phe197 to Leu218. His198 is a binding site for chlorophyll a. A quinone is bound by residues His215 and Ser264–Phe265. Residue His215 coordinates Fe cation. A Fe cation-binding site is contributed by His272. Residues Phe274–Met288 traverse the membrane as a helical segment. [CaMn4O5] cluster contacts are provided by His332, Glu333, Asp342, and Ala344. Positions Ser345–Gly360 are excised as a propeptide.

This sequence belongs to the reaction center PufL/M/PsbA/D family. As to quaternary structure, PSII is composed of 1 copy each of membrane proteins PsbA, PsbB, PsbC, PsbD, PsbE, PsbF, PsbH, PsbI, PsbJ, PsbK, PsbL, PsbM, PsbT, PsbX, PsbY, PsbZ, Psb30/Ycf12, at least 3 peripheral proteins of the oxygen-evolving complex and a large number of cofactors. It forms dimeric complexes. The cofactor is The D1/D2 heterodimer binds P680, chlorophylls that are the primary electron donor of PSII, and subsequent electron acceptors. It shares a non-heme iron and each subunit binds pheophytin, quinone, additional chlorophylls, carotenoids and lipids. D1 provides most of the ligands for the Mn4-Ca-O5 cluster of the oxygen-evolving complex (OEC). There is also a Cl(-1) ion associated with D1 and D2, which is required for oxygen evolution. The PSII complex binds additional chlorophylls, carotenoids and specific lipids.. Post-translationally, tyr-161 forms a radical intermediate that is referred to as redox-active TyrZ, YZ or Y-Z. In terms of processing, C-terminally processed by CTPA; processing is essential to allow assembly of the oxygen-evolving complex and thus photosynthetic growth.

The protein resides in the plastid. It is found in the chloroplast thylakoid membrane. The enzyme catalyses 2 a plastoquinone + 4 hnu + 2 H2O = 2 a plastoquinol + O2. Its function is as follows. Photosystem II (PSII) is a light-driven water:plastoquinone oxidoreductase that uses light energy to abstract electrons from H(2)O, generating O(2) and a proton gradient subsequently used for ATP formation. It consists of a core antenna complex that captures photons, and an electron transfer chain that converts photonic excitation into a charge separation. The D1/D2 (PsbA/PsbD) reaction center heterodimer binds P680, the primary electron donor of PSII as well as several subsequent electron acceptors. This Trieres chinensis (Marine centric diatom) protein is Photosystem II protein D1.